Here is a 369-residue protein sequence, read N- to C-terminus: Putative F-box/kelch-repeat protein At4g39760 (369 aa).

The 47-residue stretch at 14–60 (SLSFSSLPHEIVVSCLARVSGSYYPKLCLVSKQFRSIILSNEIYKAR) folds into the F-box domain. Kelch repeat units follow at residues 131–177 (ETYI…GQYP), 178–224 (NIYV…KMKM), and 228–274 (NVYV…KNCW).

This Arabidopsis thaliana (Mouse-ear cress) protein is Putative F-box/kelch-repeat protein At4g39760.